We begin with the raw amino-acid sequence, 435 residues long: GTPase Obg (435 aa).

An Obg domain is found at 1-158 (MFLDTAKVSV…RQLELELKIL (158 aa)). The OBG-type G domain maps to 159–336 (ADVGLVGFPS…LLEATAELLA (178 aa)). Residues 165–172 (GFPSVGKS), 190–194 (FTTIV), 212–215 (DLPG), 282–285 (NKMD), and 317–319 (SSL) contribute to the GTP site. Serine 172 and threonine 192 together coordinate Mg(2+). The OCT domain occupies 357-435 (GFAAEEKAFE…IGKFEFEFVD (79 aa)).

It belongs to the TRAFAC class OBG-HflX-like GTPase superfamily. OBG GTPase family. As to quaternary structure, monomer. Mg(2+) serves as cofactor.

It localises to the cytoplasm. Its function is as follows. An essential GTPase which binds GTP, GDP and possibly (p)ppGpp with moderate affinity, with high nucleotide exchange rates and a fairly low GTP hydrolysis rate. Plays a role in control of the cell cycle, stress response, ribosome biogenesis and in those bacteria that undergo differentiation, in morphogenesis control. In Streptococcus equi subsp. zooepidemicus (strain MGCS10565), this protein is GTPase Obg.